The following is a 195-amino-acid chain: 2-cysteine peroxiredoxin, chloroplastic (195 aa).

Residues 3 to 161 enclose the Thioredoxin domain; that stretch reads IRVGQKAPDF…ALRTLQAIQY (159 aa). Catalysis depends on cysteine 49, which acts as the Cysteine sulfenic acid (-SOH) intermediate.

This sequence belongs to the peroxiredoxin family. AhpC/Prx1 subfamily. As to quaternary structure, homodimer; disulfide-linked, upon oxidation.

Its subcellular location is the plastid. The protein resides in the chloroplast. It catalyses the reaction a hydroperoxide + [thioredoxin]-dithiol = an alcohol + [thioredoxin]-disulfide + H2O. Its function is as follows. Thiol-specific peroxidase that catalyzes the reduction of hydrogen peroxide and organic hydroperoxides to water and alcohols, respectively. Plays a role in cell protection against oxidative stress by detoxifying peroxides. The sequence is that of 2-cysteine peroxiredoxin, chloroplastic from Chattonella marina var. antiqua (Red tide flagellate).